Consider the following 272-residue polypeptide: MQYQHPSSSALGLSVPLFAPTPLQHPTPFYIDDILGRNSASNGTPALPTPTLPSPNSSFTSLVATYRTPIYEPTPIHPAFTHPGAALAASYGASTYASPLYPFSRPVSDYTHALIRHDSLGKPLLWSPFIQRPLHKRKGGQVRFSNDQTIELEKKFETQKYLSPPERKRLAKMLQLSERQVKTWFQNRRAKWRRLKQENPQGNKKDETESLENICEESQERCLSAEQKSRESSLDDPTSSPTSQGNLDSEVSDDSDQEVDIEGDKGYYNCAH.

The segment at residues 137 to 196 is a DNA-binding region (homeobox); it reads RKGGQVRFSNDQTIELEKKFETQKYLSPPERKRLAKMLQLSERQVKTWFQNRRAKWRRLK. The tract at residues 222–272 is disordered; it reads CLSAEQKSRESSLDDPTSSPTSQGNLDSEVSDDSDQEVDIEGDKGYYNCAH. Over residues 250–261 the composition is skewed to acidic residues; sequence EVSDDSDQEVDI.

As to expression, first expressed in the dorsal endomesoderm of the gastrula stage embryo. The dorsal endomesoderm contributes to forming the embryonic liver, and expression continues in the liver throughout development. Also expressed in precursors of the developing thyroid gland, and beginning at the tailbud stage, expressed in the ventral region of the head. Also transiently expressed in the endothelial layer of developing vascular tissues of the embryo, beginning at the tailbud stages.

Its subcellular location is the nucleus. Functionally, recognizes the DNA sequence 5'-ATTAA-3'. Transcriptional repressor. Regulates the differentiation of both endothelial and blood cells. Probably plays a role in the proliferation of vascular endothelial cells during blood vessel development. Establishes anterior identity at two levels; acts early to enhance canonical wnt-signaling by repressing expression of tle4, and acts later to inhibit nodal-signaling by directly targeting nodal/nr1 and nodal2/nr2. May play a role in liver development. Induces heart development. The polypeptide is Hematopoietically-expressed homeobox protein hhex (Xenopus laevis (African clawed frog)).